We begin with the raw amino-acid sequence, 227 residues long: Guanylate kinase (227 aa).

Residues 21–199 form the Guanylate kinase-like domain; it reads GNLFMVVAPS…ALAELECIVA (179 aa). 28–35 is a binding site for ATP; that stretch reads APSGAGKS.

It belongs to the guanylate kinase family.

The protein localises to the cytoplasm. It catalyses the reaction GMP + ATP = GDP + ADP. Its function is as follows. Essential for recycling GMP and indirectly, cGMP. The polypeptide is Guanylate kinase (Burkholderia orbicola (strain AU 1054)).